The chain runs to 147 residues: Small ribosomal subunit protein uS12 (147 aa).

It belongs to the universal ribosomal protein uS12 family. In terms of assembly, part of the 30S ribosomal subunit.

Functionally, with S4 and S5 plays an important role in translational accuracy. Located at the interface of the 30S and 50S subunits. The chain is Small ribosomal subunit protein uS12 from Thermococcus kodakarensis (strain ATCC BAA-918 / JCM 12380 / KOD1) (Pyrococcus kodakaraensis (strain KOD1)).